Reading from the N-terminus, the 495-residue chain is MAKRELQDKGSTEHRAKKKSRNEKHTKKAEDSQASAQSSETQYTDPKEPSPAVIEKFLEENSVKITDTLEGATKLHPITSFSHLPTCNSALYRPLESFTSPTAIQSATWPFLFSGRDVIGIAETGSGKTLGFGLPCLKNLQDSAKKGKPYKPTAVMISPTRELAMQIHDQISKFAELVDIKVACIFGGVKKEEQREALKTAAIVVATPGRLKDLQNDGSVDLGKVKYLVLDEADRMLDKGFEQDIKDIIRPMPVSKRQTVMFTATWPPVVRDLAATFMTSPVTVTIGGEPSADPRANTRIKQVVEVVKPHEKEQRLVQLLNKYQKGPSSSDKILVFCLYKKEAVRVERLLWNKGFKVAGIHGDLGQQERFKSLESFKKGVSTVLVATDVAARGLDIPSVKLVINVTFPLTVEDYVHRIGRTGRAGAEGHAITLFTEVDKAQSGALINVLKAANQDVPEDLLKFGATVKKKQHDAYGAFYKDVDTNKTSTKIVFDD.

Basic and acidic residues predominate over residues 1–14 (MAKRELQDKGSTEH). Residues 1–49 (MAKRELQDKGSTEHRAKKKSRNEKHTKKAEDSQASAQSSETQYTDPKEP) are disordered. Positions 15–27 (RAKKKSRNEKHTK) are enriched in basic residues. The short motif at 97–105 (SFTSPTAIQ) is the Q motif element. Residues 109–284 (WPFLFSGRDV…ATFMTSPVTV (176 aa)) enclose the Helicase ATP-binding domain. 122-129 (AETGSGKT) contacts ATP. Residues 231-234 (DEAD) carry the DEAD box motif. In terms of domain architecture, Helicase C-terminal spans 315-464 (RLVQLLNKYQ…DVPEDLLKFG (150 aa)).

The protein belongs to the DEAD box helicase family. DDX5/DBP2 subfamily.

It localises to the nucleus. Its subcellular location is the nucleolus. It catalyses the reaction ATP + H2O = ADP + phosphate + H(+). ATP-dependent RNA helicase required for 60S ribosomal subunit synthesis. Involved in efficient pre-rRNA processing, predominantly at site A3, which is necessary for the normal formation of 25S and 5.8S rRNAs. This Aspergillus niger (strain ATCC MYA-4892 / CBS 513.88 / FGSC A1513) protein is ATP-dependent RNA helicase dbp3 (dbp3).